The primary structure comprises 456 residues: Argininosuccinate lyase (456 aa).

It belongs to the lyase 1 family. Argininosuccinate lyase subfamily.

It is found in the cytoplasm. It catalyses the reaction 2-(N(omega)-L-arginino)succinate = fumarate + L-arginine. Its pathway is amino-acid biosynthesis; L-arginine biosynthesis; L-arginine from L-ornithine and carbamoyl phosphate: step 3/3. This Listeria monocytogenes serotype 4b (strain CLIP80459) protein is Argininosuccinate lyase.